Consider the following 118-residue polypeptide: Ribosome-binding factor A (118 aa).

Belongs to the RbfA family. In terms of assembly, monomer. Binds 30S ribosomal subunits, but not 50S ribosomal subunits or 70S ribosomes.

It is found in the cytoplasm. Functionally, one of several proteins that assist in the late maturation steps of the functional core of the 30S ribosomal subunit. Associates with free 30S ribosomal subunits (but not with 30S subunits that are part of 70S ribosomes or polysomes). Required for efficient processing of 16S rRNA. May interact with the 5'-terminal helix region of 16S rRNA. This chain is Ribosome-binding factor A, found in Streptococcus pyogenes serotype M1.